A 374-amino-acid polypeptide reads, in one-letter code: tRNA-specific 2-thiouridylase MnmA (374 aa).

Residues 17 to 24 and methionine 43 contribute to the ATP site; that span reads GMSGGVDS. Residues 103–105 are interaction with target base in tRNA; the sequence is NPD. Catalysis depends on cysteine 108, which acts as the Nucleophile. A disulfide bridge connects residues cysteine 108 and cysteine 204. Glycine 132 contributes to the ATP binding site. Residues 154–156 are interaction with tRNA; that stretch reads KDQ. Residue cysteine 204 is the Cysteine persulfide intermediate of the active site. The segment at 316–317 is interaction with tRNA; the sequence is RY.

It belongs to the MnmA/TRMU family.

The protein localises to the cytoplasm. The catalysed reaction is S-sulfanyl-L-cysteinyl-[protein] + uridine(34) in tRNA + AH2 + ATP = 2-thiouridine(34) in tRNA + L-cysteinyl-[protein] + A + AMP + diphosphate + H(+). Functionally, catalyzes the 2-thiolation of uridine at the wobble position (U34) of tRNA, leading to the formation of s(2)U34. This chain is tRNA-specific 2-thiouridylase MnmA, found in Pseudomonas fluorescens (strain Pf0-1).